The following is a 362-amino-acid chain: Peptide chain release factor 1 (362 aa).

An N5-methylglutamine modification is found at glutamine 235.

The protein belongs to the prokaryotic/mitochondrial release factor family. In terms of processing, methylated by PrmC. Methylation increases the termination efficiency of RF1.

It is found in the cytoplasm. Its function is as follows. Peptide chain release factor 1 directs the termination of translation in response to the peptide chain termination codons UAG and UAA. In Acinetobacter baumannii (strain AYE), this protein is Peptide chain release factor 1.